We begin with the raw amino-acid sequence, 202 residues long: GTP cyclohydrolase 1 (202 aa).

Zn(2+) is bound by residues C90, H93, and C163.

Belongs to the GTP cyclohydrolase I family. Toroid-shaped homodecamer, composed of two pentamers of five dimers.

The catalysed reaction is GTP + H2O = 7,8-dihydroneopterin 3'-triphosphate + formate + H(+). It participates in cofactor biosynthesis; 7,8-dihydroneopterin triphosphate biosynthesis; 7,8-dihydroneopterin triphosphate from GTP: step 1/1. The sequence is that of GTP cyclohydrolase 1 from Mycolicibacterium vanbaalenii (strain DSM 7251 / JCM 13017 / BCRC 16820 / KCTC 9966 / NRRL B-24157 / PYR-1) (Mycobacterium vanbaalenii).